The sequence spans 444 residues: Probable glycine dehydrogenase (decarboxylating) subunit 1 (444 aa).

The protein belongs to the GcvP family. N-terminal subunit subfamily. As to quaternary structure, the glycine cleavage system is composed of four proteins: P, T, L and H. In this organism, the P 'protein' is a heterodimer of two subunits.

It catalyses the reaction N(6)-[(R)-lipoyl]-L-lysyl-[glycine-cleavage complex H protein] + glycine + H(+) = N(6)-[(R)-S(8)-aminomethyldihydrolipoyl]-L-lysyl-[glycine-cleavage complex H protein] + CO2. Its function is as follows. The glycine cleavage system catalyzes the degradation of glycine. The P protein binds the alpha-amino group of glycine through its pyridoxal phosphate cofactor; CO(2) is released and the remaining methylamine moiety is then transferred to the lipoamide cofactor of the H protein. The chain is Probable glycine dehydrogenase (decarboxylating) subunit 1 from Chlorobium phaeobacteroides (strain DSM 266 / SMG 266 / 2430).